A 340-amino-acid polypeptide reads, in one-letter code: Undecaprenyl-phosphate 4-deoxy-4-formamido-L-arabinose transferase (340 aa).

Helical transmembrane passes span 235–255 and 269–289; these read LSIV…ALIF and LFVL…GMGL.

Belongs to the glycosyltransferase 2 family.

It is found in the cell inner membrane. The enzyme catalyses UDP-4-deoxy-4-formamido-beta-L-arabinose + di-trans,octa-cis-undecaprenyl phosphate = 4-deoxy-4-formamido-alpha-L-arabinopyranosyl di-trans,octa-cis-undecaprenyl phosphate + UDP. It participates in glycolipid biosynthesis; 4-amino-4-deoxy-alpha-L-arabinose undecaprenyl phosphate biosynthesis; 4-amino-4-deoxy-alpha-L-arabinose undecaprenyl phosphate from UDP-4-deoxy-4-formamido-beta-L-arabinose and undecaprenyl phosphate: step 1/2. It functions in the pathway bacterial outer membrane biogenesis; lipopolysaccharide biosynthesis. Catalyzes the transfer of 4-deoxy-4-formamido-L-arabinose from UDP to undecaprenyl phosphate. The modified arabinose is attached to lipid A and is required for resistance to polymyxin and cationic antimicrobial peptides. This is Undecaprenyl-phosphate 4-deoxy-4-formamido-L-arabinose transferase from Pseudomonas fluorescens (strain Pf0-1).